The following is an 89-amino-acid chain: Small ribosomal subunit protein bS16c (89 aa).

Belongs to the bacterial ribosomal protein bS16 family.

Its subcellular location is the plastid. It is found in the chloroplast. This Drimys granadensis protein is Small ribosomal subunit protein bS16c.